The sequence spans 401 residues: Canavanine gamma-lyase (401 aa).

Lysine 214 is subject to N6-(pyridoxal phosphate)lysine.

It belongs to the trans-sulfuration enzymes family. It depends on pyridoxal 5'-phosphate as a cofactor.

The catalysed reaction is L-canavanine + H2O = N-hydroxyguanidine + L-homoserine. In terms of biological role, lyase involved in the degradation of canavanine, the delta-oxa-analog of arginine, allowing growth on canavanine as sole nitrogen and carbon source. Catalyzes the elimination of hydroxyguanidine from canavanine with a subsequent water addition to yield homoserine. The polypeptide is Canavanine gamma-lyase (Rhizobium leguminosarum bv. trifolii (strain WSM2304)).